The following is a 448-amino-acid chain: MIRSLRIRLMLGAAALAVLFMLALLPALQRAFGIALENTIEQRLAADVATLVSAARVEKGRLVMPEHLPVEEFNLPEAKVLGYIYDQNGDLLWRSTSAADESINYTPRYDGRGNEFHTTRDAKGEEFFVFDVEIDLLRGKQAAYSIVTMQSVSEFESLLKGFREQLYLWLGGALLVLLGLLWLGLTWGFRAMRGLSSELDQIESGERESLSEEHPRELLRLTHSLNRLLRSEHKQRERYRHSLGDLAHSLKTPLAVLQGVGDQLAEEPGNREQVRVLQGQIERMSQQIGYQLQRASLRKSGLVRHREQLAPLVETLCDALDKVYRDKRVSLQRDFSPSFSVPVERGALLELLGNLLENAYRLCLGRVRVGARLGPGYSELWVEDDGPGVPAEQRARIIRRGERADTQHPGQGIGLAVALDIIESYDGELSLDDSELGGACFRIRFATV.

An N-terminal signal peptide occupies residues 1–33 (MIRSLRIRLMLGAAALAVLFMLALLPALQRAFG). The helical transmembrane segment at 169–189 (WLGGALLVLLGLLWLGLTWGF) threads the bilayer. Residues 186-237 (TWGFRAMRGLSSELDQIESGERESLSEEHPRELLRLTHSLNRLLRSEHKQRE) form the HAMP domain. Positions 245–448 (DLAHSLKTPL…ACFRIRFATV (204 aa)) constitute a Histidine kinase domain. At His248 the chain carries Phosphohistidine; by autocatalysis.

Its subcellular location is the membrane. The enzyme catalyses ATP + protein L-histidine = ADP + protein N-phospho-L-histidine.. In terms of biological role, member of the two-component regulatory system PhoP/PhoQ that plays a role in the regulation of resistance towards polymyxin B and cationic antimicrobial peptides in response to limiting concentrations of Mg(2+). May function as a membrane-associated protein kinase that phosphorylates PhoP in response to environmental signals leading to activation of specific gene promoters. The protein is Two-component sensor PhoQ (phoQ) of Pseudomonas aeruginosa (strain ATCC 15692 / DSM 22644 / CIP 104116 / JCM 14847 / LMG 12228 / 1C / PRS 101 / PAO1).